The chain runs to 71 residues: VLIIAVLFLTACQLTTAETSSRGKQKHRALRSTDKNSRMTKRCTAPGGACYAAYTCCSNACNLNTKKCVLS.

Positions 1 to 17 (VLIIAVLFLTACQLTTA) are cleaved as a signal peptide. A propeptide spanning residues 18–40 (ETSSRGKQKHRALRSTDKNSRMT) is cleaved from the precursor. 3 disulfides stabilise this stretch: cysteine 43–cysteine 57, cysteine 50–cysteine 61, and cysteine 56–cysteine 68.

The protein belongs to the conotoxin O1 superfamily. As to expression, expressed by the venom duct.

Its subcellular location is the secreted. This Conus abbreviatus (Abbreviated cone) protein is Conotoxin AbVIG.